The following is a 213-amino-acid chain: MAVFKGITPEQIESLSSGLHAGVDEVGRGPLVGNVVTAAVILDPNNPITGLNDSKKLTEKKRELLFAEIHEKALCINVGHATPDEIDELNILHATMLAMQRAVAGLDIKPLSVLVDGNRTPAFYHGEETEDRIEAHAVVKGDGLISAISAASIIAKVIRDREMDLLDMEYPQYGFAKHKGYPTKAHFEALELHGVLPEHRKSFRPVKERLAKR.

The RNase H type-2 domain maps to 18–213 (GLHAGVDEVG…RPVKERLAKR (196 aa)). The a divalent metal cation site is built by Asp24, Glu25, and Asp116.

This sequence belongs to the RNase HII family. It depends on Mn(2+) as a cofactor. Mg(2+) serves as cofactor.

The protein localises to the cytoplasm. It catalyses the reaction Endonucleolytic cleavage to 5'-phosphomonoester.. In terms of biological role, endonuclease that specifically degrades the RNA of RNA-DNA hybrids. This chain is Ribonuclease HII, found in Shewanella woodyi (strain ATCC 51908 / MS32).